The chain runs to 281 residues: 2,3,4,5-tetrahydropyridine-2,6-dicarboxylate N-succinyltransferase (281 aa).

Substrate is bound by residues R108 and D145.

The protein belongs to the transferase hexapeptide repeat family. Homotrimer.

Its subcellular location is the cytoplasm. It catalyses the reaction (S)-2,3,4,5-tetrahydrodipicolinate + succinyl-CoA + H2O = (S)-2-succinylamino-6-oxoheptanedioate + CoA. The protein operates within amino-acid biosynthesis; L-lysine biosynthesis via DAP pathway; LL-2,6-diaminopimelate from (S)-tetrahydrodipicolinate (succinylase route): step 1/3. This is 2,3,4,5-tetrahydropyridine-2,6-dicarboxylate N-succinyltransferase from Bradyrhizobium diazoefficiens (strain JCM 10833 / BCRC 13528 / IAM 13628 / NBRC 14792 / USDA 110).